A 1206-amino-acid polypeptide reads, in one-letter code: Cilia- and flagella-associated protein 157 (1206 aa).

4 disordered regions span residues 26-52 (GGGG…GRDL), 79-109 (RAEQ…QQAP), 125-173 (EATC…RGPL), and 327-405 (GSGK…EEDW). Composition is skewed to low complexity over residues 88–109 (GRPQ…QQAP), 156–173 (AKAV…RGPL), and 385–397 (QQLG…QPGG). 3 coiled-coil regions span residues 634-732 (TDEL…KTKD), 799-833 (TEKL…LARR), and 876-903 (LHLA…KTAE). 3 disordered regions span residues 936-990 (TTTN…DELS), 1011-1072 (LSHG…GATS), and 1168-1206 (PWGK…SLKV). 2 stretches are compositionally biased toward low complexity: residues 951 to 973 (AGAD…SSSA) and 1014 to 1035 (GPLS…ALAG). Gly residues-rich tracts occupy residues 1037 to 1046 (WGPGSPGGSR) and 1058 to 1067 (SAGGMGGPQG). 2 stretches are compositionally biased toward polar residues: residues 1175-1184 (QQPLTTTKHS) and 1193-1206 (GPSN…SLKV).

It belongs to the CFAP157 family.

It is found in the cell projection. Its subcellular location is the cilium. The protein localises to the flagellum. The chain is Cilia- and flagella-associated protein 157 from Chlamydomonas reinhardtii (Chlamydomonas smithii).